A 610-amino-acid polypeptide reads, in one-letter code: Dopamine beta-hydroxylase (610 aa).

Residues 1-9 are Cytoplasmic-facing; that stretch reads MKVPSPSVR. A helical; Signal-anchor for type II membrane protein transmembrane segment spans residues 10–30; the sequence is EAASMYGTAVAIFLVILVAAL. Residues 31-610 lie on the Intragranular side of the membrane; it reads QGSEPPESPF…TVVDIGGGKG (580 aa). A DOMON domain is found at 50–166; it reads GTLELSWNVS…GTVHLVYGIL (117 aa). 3 N-linked (GlcNAc...) asparagine glycosylation sites follow: Asn-57, Asn-177, and Asn-194. Disulfide bonds link Cys-147–Cys-589, Cys-225–Cys-276, Cys-262–Cys-288, Cys-383–Cys-496, Cys-387–Cys-558, and Cys-459–Cys-481. Tyr-223 is a catalytic residue. 2 residues coordinate Cu(2+): His-255 and His-256. 4 residues coordinate Cu(2+): His-326, His-405, His-407, and Met-480. Residue His-405 is part of the active site. A disordered region spans residues 586-610; it reads TPRCPASRGRSPAGPTVVDIGGGKG.

Belongs to the copper type II ascorbate-dependent monooxygenase family. As to quaternary structure, homotetramer; composed of two disulfide-linked dimers. It depends on Cu(2+) as a cofactor. Post-translationally, proteolytic cleavage after the membrane-anchor leads to the release of the soluble form. In terms of processing, N-glycosylated. Detected in adrenal medulla chromaffin cells.

Its subcellular location is the cytoplasmic vesicle. The protein resides in the secretory vesicle lumen. It localises to the secretory vesicle. It is found in the chromaffin granule lumen. The protein localises to the secreted. Its subcellular location is the secretory vesicle membrane. The protein resides in the chromaffin granule membrane. It catalyses the reaction dopamine + 2 L-ascorbate + O2 = (R)-noradrenaline + 2 monodehydro-L-ascorbate radical + H2O. It participates in catecholamine biosynthesis; (R)-noradrenaline biosynthesis; (R)-noradrenaline from dopamine: step 1/1. Its function is as follows. Catalyzes the hydroxylation of dopamine to noradrenaline (also known as norepinephrine), and is thus vital for regulation of these neurotransmitters. This is Dopamine beta-hydroxylase (DBH) from Equus caballus (Horse).